We begin with the raw amino-acid sequence, 207 residues long: Large ribosomal subunit protein uL4 (207 aa).

Positions 49-78 are disordered; sequence HAVKNRSAVSGGGRKPWRQKGTGRARQGSI.

Belongs to the universal ribosomal protein uL4 family. Part of the 50S ribosomal subunit.

Functionally, one of the primary rRNA binding proteins, this protein initially binds near the 5'-end of the 23S rRNA. It is important during the early stages of 50S assembly. It makes multiple contacts with different domains of the 23S rRNA in the assembled 50S subunit and ribosome. Forms part of the polypeptide exit tunnel. The polypeptide is Large ribosomal subunit protein uL4 (Streptococcus gordonii (strain Challis / ATCC 35105 / BCRC 15272 / CH1 / DL1 / V288)).